A 72-amino-acid polypeptide reads, in one-letter code: Large ribosomal subunit protein bL31 (72 aa).

C16, C18, C38, and C41 together coordinate Zn(2+).

Belongs to the bacterial ribosomal protein bL31 family. Type A subfamily. In terms of assembly, part of the 50S ribosomal subunit. Zn(2+) is required as a cofactor.

In terms of biological role, binds the 23S rRNA. The sequence is that of Large ribosomal subunit protein bL31 from Beutenbergia cavernae (strain ATCC BAA-8 / DSM 12333 / CCUG 43141 / JCM 11478 / NBRC 16432 / NCIMB 13614 / HKI 0122).